The chain runs to 207 residues: Large ribosomal subunit protein uL4 (207 aa).

A disordered region spans residues 49–78; that stretch reads HAVKNRSAVSGGGRKPWRQKGTGRARQGSI.

This sequence belongs to the universal ribosomal protein uL4 family. In terms of assembly, part of the 50S ribosomal subunit.

Functionally, one of the primary rRNA binding proteins, this protein initially binds near the 5'-end of the 23S rRNA. It is important during the early stages of 50S assembly. It makes multiple contacts with different domains of the 23S rRNA in the assembled 50S subunit and ribosome. Its function is as follows. Forms part of the polypeptide exit tunnel. In Streptococcus uberis (strain ATCC BAA-854 / 0140J), this protein is Large ribosomal subunit protein uL4.